Here is a 100-residue protein sequence, read N- to C-terminus: Urease subunit gamma (100 aa).

It belongs to the urease gamma subunit family. As to quaternary structure, heterotrimer of UreA (gamma), UreB (beta) and UreC (alpha) subunits. Three heterotrimers associate to form the active enzyme.

The protein resides in the cytoplasm. The catalysed reaction is urea + 2 H2O + H(+) = hydrogencarbonate + 2 NH4(+). It functions in the pathway nitrogen metabolism; urea degradation; CO(2) and NH(3) from urea (urease route): step 1/1. The sequence is that of Urease subunit gamma from Opitutus terrae (strain DSM 11246 / JCM 15787 / PB90-1).